Here is a 454-residue protein sequence, read N- to C-terminus: 3-phosphoshikimate 1-carboxyvinyltransferase (454 aa).

Residues lysine 39, serine 40, and arginine 44 each coordinate 3-phosphoshikimate. Residue lysine 39 coordinates phosphoenolpyruvate. Residues glycine 112 and arginine 140 each contribute to the phosphoenolpyruvate site. The 3-phosphoshikimate site is built by serine 185, glutamine 187, aspartate 333, and lysine 360. Glutamine 187 contacts phosphoenolpyruvate. The active-site Proton acceptor is aspartate 333. Phosphoenolpyruvate-binding residues include arginine 364 and arginine 405.

It belongs to the EPSP synthase family. In terms of assembly, monomer.

It localises to the cytoplasm. The catalysed reaction is 3-phosphoshikimate + phosphoenolpyruvate = 5-O-(1-carboxyvinyl)-3-phosphoshikimate + phosphate. It functions in the pathway metabolic intermediate biosynthesis; chorismate biosynthesis; chorismate from D-erythrose 4-phosphate and phosphoenolpyruvate: step 6/7. Its function is as follows. Catalyzes the transfer of the enolpyruvyl moiety of phosphoenolpyruvate (PEP) to the 5-hydroxyl of shikimate-3-phosphate (S3P) to produce enolpyruvyl shikimate-3-phosphate and inorganic phosphate. This Xylella fastidiosa (strain 9a5c) protein is 3-phosphoshikimate 1-carboxyvinyltransferase.